Consider the following 470-residue polypeptide: Uronate isomerase (470 aa).

It belongs to the metallo-dependent hydrolases superfamily. Uronate isomerase family.

The enzyme catalyses D-glucuronate = D-fructuronate. It catalyses the reaction aldehydo-D-galacturonate = keto-D-tagaturonate. It functions in the pathway carbohydrate metabolism; pentose and glucuronate interconversion. The polypeptide is Uronate isomerase (Escherichia coli O17:K52:H18 (strain UMN026 / ExPEC)).